The primary structure comprises 337 residues: Geranylgeranyl pyrophosphate synthase subD (337 aa).

Residues Lys-53, Arg-56, and His-85 each contribute to the isopentenyl diphosphate site. Positions 92 and 96 each coordinate Mg(2+). Residue Arg-101 participates in dimethylallyl diphosphate binding. Arg-102 is a binding site for isopentenyl diphosphate. Positions 179, 180, and 219 each coordinate dimethylallyl diphosphate. Asp-222 provides a ligand contact to Mg(2+). The dimethylallyl diphosphate site is built by Asn-226, Lys-236, and Lys-246.

This sequence belongs to the FPP/GGPP synthase family. The cofactor is Mg(2+).

It carries out the reaction isopentenyl diphosphate + dimethylallyl diphosphate = (2E)-geranyl diphosphate + diphosphate. It catalyses the reaction isopentenyl diphosphate + (2E)-geranyl diphosphate = (2E,6E)-farnesyl diphosphate + diphosphate. The enzyme catalyses isopentenyl diphosphate + (2E,6E)-farnesyl diphosphate = (2E,6E,10E)-geranylgeranyl diphosphate + diphosphate. It functions in the pathway secondary metabolite biosynthesis; terpenoid biosynthesis. In terms of biological role, geranylgeranyl pyrophosphate synthase; part of the gene cluster that mediates the biosynthesis of the immunosuppressants subglutinols, meroterpenoids consisting of an alpha-pyrone (4-hydroxy-5,6-dimethyl-2-pyrone) moiety attached to a decalin core fused to a five-membered cyclic ether carrying a prenylside chain. The first step of the pathway is the synthesis of the alpha-pyrone moiety by the polyketide synthase subA via condensation of one acetyl-CoA starter unit with 3 malonyl-CoA units and 2 methylations. The alpha-pyrone is then combined with geranylgeranyl pyrophosphate (GGPP) formed by the GGPP synthase subD through the action of the prenyltransferase subC to yield a linear alpha-pyrone diterpenoid. Subsequent steps in the subglutinol biosynthetic pathway involve the decalin core formation, which is thought to be initiated by the epoxidation of the C10-C11 olefin by the FAD-dependent oxidoreductase subE. The following cyclization cascade would be catalyzed by the terpene cyclase subB. Lastly, the FAD-dependent dehydrogenase subF probably catalyzes the five-membered cyclic ether formation to complete the formation of subglutinol A. Subsequent redox reactions appear to give rise to subglutinol C and D, however, it remains unclear which enzymes are responsible for these transformations. SubD may have secondary function in the conversion of the identified subglutinols to subglutinol analog 45, which seems to be the major product of the cluster. This Metarhizium robertsii (strain ARSEF 23 / ATCC MYA-3075) (Metarhizium anisopliae (strain ARSEF 23)) protein is Geranylgeranyl pyrophosphate synthase subD.